Reading from the N-terminus, the 520-residue chain is Keratin, type II cytoskeletal 78 (520 aa).

The segment at 1-110 is head; that stretch reads MSLSPCRAQR…DPQFQVVRTQ (110 aa). The segment at 111–146 is coil 1A; it reads ETQEIRTLNNQFASFIDKVRFLEQQNKVLETKWHLL. The IF rod domain occupies 111-424; that stretch reads ETQEIRTLNN…RLLEGEECRM (314 aa). A linker 1 region spans residues 147–165; the sequence is QQQGLSGSQQGLEPVFEAC. The interval 166 to 258 is coil 1B; it reads LDQLRKQLEQ…LNEEELGQLQ (93 aa). The interval 259-281 is linker 12; the sequence is TQASDTSVVLSMDNNRYLDFSSI. The interval 282-421 is coil 2; it reads ITEVRARYEE…TYRRLLEGEE (140 aa). The tract at residues 422–520 is tail; the sequence is CRMSGECTSQ…ESSLKTSITY (99 aa).

It belongs to the intermediate filament family. Heterotetramer of two type I and two type II keratins. In terms of tissue distribution, in non-keratinising esophageal and vaginal epithelium, strongly expressed in the basal and parabasal/lower suprabasal cell layers with considerably decreased expression in the mid/upper suprabasal layers (at protein level). A similar gradient from basal to lower suprabasal layers is seen in the partially keratinised dorsal tongue epithelium, in the scalp and in the plantar epidermis (at protein level). Extension of expression into the suprabasal compartments is distinctly more pronounced in non-keratinising epithelia than in keratinising epithelia and epidermis (at protein level). In scalp sections, present in the interfollicular epidermis and infundibulum including the entire outer root sheath of the hair follicles and also in the sebocytes (at protein level). In sweat glands, expressed in peripheral and luminal cells of the lower duct and in peripheral cells of the middle/upper duct with no expression observed in luminal cells (at protein level). In embryos at the 14th week of pregnancy, detected in basal and parabasal layers but is absent from the uppermost epidermal layer (at protein level). Expressed in tongue epithelium.

The polypeptide is Keratin, type II cytoskeletal 78 (KRT78) (Homo sapiens (Human)).